The chain runs to 248 residues: ATP synthase subunit a, chloroplastic (248 aa).

5 helical membrane-spanning segments follow: residues 37–57 (AQVL…AVLA), 96–116 (VPFI…GALF), 135–155 (INTT…AGLH), 200–220 (LVVA…MMFL), and 221–241 (GLFT…AYIG).

Belongs to the ATPase A chain family. As to quaternary structure, F-type ATPases have 2 components, CF(1) - the catalytic core - and CF(0) - the membrane proton channel. CF(1) has five subunits: alpha(3), beta(3), gamma(1), delta(1), epsilon(1). CF(0) has four main subunits: a, b, b' and c.

It localises to the plastid. It is found in the chloroplast thylakoid membrane. Key component of the proton channel; it plays a direct role in the translocation of protons across the membrane. The sequence is that of ATP synthase subunit a, chloroplastic from Marchantia polymorpha (Common liverwort).